The following is a 92-amino-acid chain: Small ribosomal subunit protein uS19c (92 aa).

This sequence belongs to the universal ribosomal protein uS19 family.

The protein localises to the plastid. It is found in the chloroplast. Functionally, protein S19 forms a complex with S13 that binds strongly to the 16S ribosomal RNA. In Piper cenocladum (Ant piper), this protein is Small ribosomal subunit protein uS19c.